The primary structure comprises 243 residues: Tryptophan synthase alpha chain (243 aa).

Catalysis depends on proton acceptor residues Glu31 and Asp42.

It belongs to the TrpA family. In terms of assembly, tetramer of two alpha and two beta chains.

It carries out the reaction (1S,2R)-1-C-(indol-3-yl)glycerol 3-phosphate + L-serine = D-glyceraldehyde 3-phosphate + L-tryptophan + H2O. The protein operates within amino-acid biosynthesis; L-tryptophan biosynthesis; L-tryptophan from chorismate: step 5/5. Functionally, the alpha subunit is responsible for the aldol cleavage of indoleglycerol phosphate to indole and glyceraldehyde 3-phosphate. This Staphylococcus epidermidis (strain ATCC 35984 / DSM 28319 / BCRC 17069 / CCUG 31568 / BM 3577 / RP62A) protein is Tryptophan synthase alpha chain.